A 1018-amino-acid chain; its full sequence is Collagen, type I, alpha 1a (1018 aa).

Residues 1-10 (QMSAGYDDKS) are compositionally biased toward basic and acidic residues. The disordered stretch occupies residues 1–991 (QMSAGYDDKS…SGEYWLDPDQ (991 aa)). The span at 13 to 30 (MPVPGPMGPMGPRGPPGS) shows a compositional bias: pro residues. Residues 31-58 (PGASGPQGFTGPPGEPGEAGPSGAMGPR) show a composition bias toward low complexity. The segment covering 67-81 (NGEDGESGKPGRGGE) has biased composition (basic and acidic residues). Over residues 126-136 (PRGNDGAAGAA) the composition is skewed to low complexity. The segment covering 138–151 (PPGPTGPAGPPGFP) has biased composition (pro residues). Positions 152-170 (GGPGAKGDAGAQGGRGPEG) are enriched in gly residues. Low complexity-rich tracts occupy residues 171–214 (PAGA…AGAP) and 223–261 (SGPQ…APGV). Residues 284–296 (GARGGPGGRGFPG) are compositionally biased toward gly residues. Composition is skewed to low complexity over residues 370–385 (VGAR…PGPK), 424–442 (AGPA…PGFQ), 452–510 (LPGE…QGMP), and 543–558 (RGLT…AGAT). The span at 568 to 577 (GPVGPGGARG) shows a compositional bias: gly residues. 2 stretches are compositionally biased toward low complexity: residues 591 to 627 (AGFA…AGPT) and 641 to 663 (PKGA…AGRV). Pro residues predominate over residues 665–677 (PPGPSGNPGPPGP). 2 stretches are compositionally biased toward low complexity: residues 701–746 (EVGA…XXPG) and 775–795 (PGLA…NEGS). Pro residues predominate over residues 819-829 (APGPPGAPGPV). Residues 843 to 862 (PAGPAGSAGPAGPRGPAGAP) show a composition bias toward low complexity. Over residues 865-876 (RGDKGESGEAGE) the composition is skewed to basic and acidic residues. Low complexity predominate over residues 889-925 (SGSSGEQGPAGAAGPAGPRGPAGSAGSPGKDGMSGLP). The Fibrillar collagen NC1 domain occupies 932–1018 (GPRGGFDLGF…CTSHTGTWGK (87 aa)). The span at 948 to 959 (KAPDPFRDRDLE) shows a compositional bias: basic and acidic residues. Positions 963–973 (TLKSLSQQLEQ) are enriched in polar residues.

It belongs to the fibrillar collagen family.

The protein resides in the secreted. It localises to the extracellular space. It is found in the extracellular matrix. The polypeptide is Collagen, type I, alpha 1a (Epinephelus costae (Goldblotch grouper)).